A 359-amino-acid polypeptide reads, in one-letter code: Fructose-bisphosphate aldolase class 2 (359 aa).

K9 carries the N6-acetyllysine modification. Position 62 (S62) interacts with D-glyceraldehyde 3-phosphate. The active-site Proton donor is the D110. The Zn(2+) site is built by H111, D145, E175, and H227. Residue G228 coordinates dihydroxyacetone phosphate. H265 provides a ligand contact to Zn(2+). Residues 266-268 (GGS) and 287-290 (NIDT) contribute to the dihydroxyacetone phosphate site.

This sequence belongs to the class II fructose-bisphosphate aldolase family. As to quaternary structure, homodimer. Zn(2+) serves as cofactor.

It catalyses the reaction beta-D-fructose 1,6-bisphosphate = D-glyceraldehyde 3-phosphate + dihydroxyacetone phosphate. It functions in the pathway carbohydrate degradation; glycolysis; D-glyceraldehyde 3-phosphate and glycerone phosphate from D-glucose: step 4/4. Its function is as follows. Catalyzes the aldol condensation of dihydroxyacetone phosphate (DHAP or glycerone-phosphate) with glyceraldehyde 3-phosphate (G3P) to form fructose 1,6-bisphosphate (FBP) in gluconeogenesis and the reverse reaction in glycolysis. The polypeptide is Fructose-bisphosphate aldolase class 2 (fbaA) (Escherichia coli O157:H7).